The sequence spans 502 residues: Regulator of hypoxia-inducible factor 1 (502 aa).

Helical transmembrane passes span 54–74 (LLAW…VFSC), 92–112 (LDVL…NHTG), 138–158 (IFGA…VLSG), 188–208 (LAPS…NALL), 241–261 (MGYL…PIFL), 272–292 (MALT…YCTA), 335–355 (GPFL…YIMV), 367–387 (LIVA…PNAG), 396–416 (TAVF…ALYF), 437–457 (AYLL…LQAA), and 465–485 (LVLP…YLFI).

In terms of tissue distribution, expressed in intestine, some sensory neurons in the head, body wall muscles and socket cells.

Its subcellular location is the endoplasmic reticulum membrane. Functionally, involved in the response to variation in environmental oxygen levels by inhibiting hif-1-mediated gene transcription in a vhl-1-independent manner. Plays a role in susceptibility to killing mediated by P.aeruginosa and by pore-forming toxins produced by B.thuringiensis. Probably by preventing hif-1 transcriptional activity, regulates behavioral responses, such as locomotion speed following acute reoxygenation. Plays a role in normal egg-laying probably by regulating spermatogenesis and in body morphogenesis. The polypeptide is Regulator of hypoxia-inducible factor 1 (Caenorhabditis elegans).